The chain runs to 225 residues: UPF0758 protein BCG9842_B0662 (225 aa).

Residues 103-225 (SIRSPEDCAK…FVSLKEKGHI (123 aa)) enclose the MPN domain. Residues histidine 174, histidine 176, and aspartate 187 each contribute to the Zn(2+) site. Positions 174–187 (HNHPSGDPTPSRED) match the JAMM motif motif.

It belongs to the UPF0758 family.

The sequence is that of UPF0758 protein BCG9842_B0662 from Bacillus cereus (strain G9842).